Consider the following 150-residue polypeptide: Lymphocyte antigen 6 complex locus protein G5c (150 aa).

The N-terminal stretch at 1–41 (MRFMAGPAGSQSLGPLCFHSSPQALYTVLLIVLVMMSLVFG) is a signal peptide. In terms of domain architecture, UPAR/Ly6 spans 60 to 150 (LRCYRCLLET…DPQNRGLYTP (91 aa)). 4 cysteine pairs are disulfide-bonded: cysteine 62-cysteine 89, cysteine 65-cysteine 74, cysteine 81-cysteine 107, and cysteine 134-cysteine 139. Asparagine 96 carries an N-linked (GlcNAc...) asparagine glycan.

As to quaternary structure, forms oligomers. N-glycosylated. Detected in T-cell lines and fetal and adult lung.

The protein localises to the secreted. Its function is as follows. May have a role in hematopoietic cell differentiation. The protein is Lymphocyte antigen 6 complex locus protein G5c (LY6G5C) of Homo sapiens (Human).